We begin with the raw amino-acid sequence, 70 residues long: DNA-directed RNA polymerase subunit epsilon (70 aa).

This sequence belongs to the RNA polymerase subunit epsilon family. As to quaternary structure, RNAP is composed of a core of 2 alpha, a beta and a beta' subunit. The core is associated with a delta subunit, and at least one of epsilon or omega. When a sigma factor is associated with the core the holoenzyme is formed, which can initiate transcription.

It carries out the reaction RNA(n) + a ribonucleoside 5'-triphosphate = RNA(n+1) + diphosphate. Its function is as follows. A non-essential component of RNA polymerase (RNAP). This is DNA-directed RNA polymerase subunit epsilon from Limosilactobacillus reuteri (strain DSM 20016) (Lactobacillus reuteri).